The primary structure comprises 263 residues: Outer membrane lipoprotein 3 (263 aa).

A signal peptide spans 1–19; it reads MKIMKLAGAVAIFSLFLTA. Residue cysteine 20 is the site of N-palmitoyl cysteine attachment. Cysteine 20 carries the S-diacylglycerol cysteine lipid modification.

It belongs to the NlpA lipoprotein family.

Its subcellular location is the cell outer membrane. The protein is Outer membrane lipoprotein 3 (plpC) of Mannheimia haemolytica (Pasteurella haemolytica).